The following is a 212-amino-acid chain: Large ribosomal subunit protein uL3 (212 aa).

Gln-153 bears the N5-methylglutamine mark.

It belongs to the universal ribosomal protein uL3 family. Part of the 50S ribosomal subunit. Forms a cluster with proteins L14 and L19. In terms of processing, methylated by PrmB.

Functionally, one of the primary rRNA binding proteins, it binds directly near the 3'-end of the 23S rRNA, where it nucleates assembly of the 50S subunit. The protein is Large ribosomal subunit protein uL3 of Shewanella denitrificans (strain OS217 / ATCC BAA-1090 / DSM 15013).